A 325-amino-acid chain; its full sequence is Acetyl-coenzyme A carboxylase carboxyl transferase subunit alpha (325 aa).

The 258-residue stretch at 35 to 292 folds into the CoA carboxyltransferase C-terminal domain; the sequence is EIEKLEARLT…DRVLRASLKQ (258 aa).

This sequence belongs to the AccA family. Acetyl-CoA carboxylase is a heterohexamer composed of biotin carboxyl carrier protein (AccB), biotin carboxylase (AccC) and two subunits each of ACCase subunit alpha (AccA) and ACCase subunit beta (AccD).

It is found in the cytoplasm. The catalysed reaction is N(6)-carboxybiotinyl-L-lysyl-[protein] + acetyl-CoA = N(6)-biotinyl-L-lysyl-[protein] + malonyl-CoA. It participates in lipid metabolism; malonyl-CoA biosynthesis; malonyl-CoA from acetyl-CoA: step 1/1. In terms of biological role, component of the acetyl coenzyme A carboxylase (ACC) complex. First, biotin carboxylase catalyzes the carboxylation of biotin on its carrier protein (BCCP) and then the CO(2) group is transferred by the carboxyltransferase to acetyl-CoA to form malonyl-CoA. This is Acetyl-coenzyme A carboxylase carboxyl transferase subunit alpha from Geobacillus thermodenitrificans (strain NG80-2).